Here is a 143-residue protein sequence, read N- to C-terminus: Nucleoside diphosphate kinase (143 aa).

ATP is bound by residues lysine 11, phenylalanine 59, arginine 87, threonine 93, arginine 104, and asparagine 114. The active-site Pros-phosphohistidine intermediate is histidine 117.

It belongs to the NDK family. As to quaternary structure, homotetramer. Requires Mg(2+) as cofactor.

Its subcellular location is the cytoplasm. It carries out the reaction a 2'-deoxyribonucleoside 5'-diphosphate + ATP = a 2'-deoxyribonucleoside 5'-triphosphate + ADP. The catalysed reaction is a ribonucleoside 5'-diphosphate + ATP = a ribonucleoside 5'-triphosphate + ADP. Functionally, major role in the synthesis of nucleoside triphosphates other than ATP. The ATP gamma phosphate is transferred to the NDP beta phosphate via a ping-pong mechanism, using a phosphorylated active-site intermediate. The polypeptide is Nucleoside diphosphate kinase (Edwardsiella ictaluri (strain 93-146)).